The chain runs to 124 residues: Putative iron-sulfur cluster insertion protein ErpA (124 aa).

Positions 49, 113, and 115 each coordinate iron-sulfur cluster.

Belongs to the HesB/IscA family. In terms of assembly, homodimer. The cofactor is iron-sulfur cluster.

Its function is as follows. Required for insertion of 4Fe-4S clusters. In Acidovorax sp. (strain JS42), this protein is Putative iron-sulfur cluster insertion protein ErpA.